We begin with the raw amino-acid sequence, 316 residues long: Beta-ketoacyl-[acyl-carrier-protein] synthase III (316 aa).

Catalysis depends on residues Cys112 and His243. The tract at residues 244–248 (QANLR) is ACP-binding. Residue Asn273 is part of the active site.

Belongs to the thiolase-like superfamily. FabH family. In terms of assembly, homodimer.

It is found in the cytoplasm. It catalyses the reaction malonyl-[ACP] + acetyl-CoA + H(+) = 3-oxobutanoyl-[ACP] + CO2 + CoA. It functions in the pathway lipid metabolism; fatty acid biosynthesis. Catalyzes the condensation reaction of fatty acid synthesis by the addition to an acyl acceptor of two carbons from malonyl-ACP. Catalyzes the first condensation reaction which initiates fatty acid synthesis and may therefore play a role in governing the total rate of fatty acid production. Possesses both acetoacetyl-ACP synthase and acetyl transacylase activities. Its substrate specificity determines the biosynthesis of branched-chain and/or straight-chain of fatty acids. This is Beta-ketoacyl-[acyl-carrier-protein] synthase III from Actinobacillus succinogenes (strain ATCC 55618 / DSM 22257 / CCUG 43843 / 130Z).